The sequence spans 347 residues: VIP36-like protein (347 aa).

An N-terminal signal peptide occupies residues 1–43 (MAAASRPSWWQRWRRRAWARDGAKLLLFLLLLGSGPGPRHVRA). Topologically, residues 44–312 (GQAVEYLKRE…VPPTPLSGLA (269 aa)) are lumenal. Residues 48 to 273 (EYLKREHSLS…DVISLKLFEL (226 aa)) form the L-type lectin-like domain. The a carbohydrate site is built by S92 and D127. 3 residues coordinate Ca(2+): D158, Y160, and N162. 160-162 (YPN) contributes to the a carbohydrate binding site. The N-linked (GlcNAc...) asparagine glycan is linked to N180. H187 provides a ligand contact to a carbohydrate. D190 serves as a coordination point for Ca(2+). C199 and C236 form a disulfide bridge. Residue 257 to 259 (GDL) coordinates a carbohydrate. The helical transmembrane segment at 313 to 335 (LFLIVFFSLVFSVFAIVIGIILY) threads the bilayer. Residues 336–347 (NKWQDQSRKRFY) lie on the Cytoplasmic side of the membrane. The Endoplasmic reticulum retention signal signature appears at 343–345 (RKR).

The protein localises to the endoplasmic reticulum membrane. It localises to the golgi apparatus membrane. May be involved in the regulation of export from the endoplasmic reticulum of a subset of glycoproteins. May function as a regulator of ERGIC-53. In Mus musculus (Mouse), this protein is VIP36-like protein (Lman2l).